The chain runs to 420 residues: Probable protein phosphatase 2C 76 (420 aa).

One can recognise a PPM-type phosphatase domain in the interval 101–347 (SCGYCSFRGK…DNITCIVVKF (247 aa)). Positions 137, 138, 299, and 338 each coordinate Mn(2+). The tract at residues 353–420 (ESPKIETNAM…PETKGEKAGE (68 aa)) is disordered. Positions 403–420 (PDPKPETEPETKGEKAGE) are enriched in basic and acidic residues.

It belongs to the PP2C family. Requires Mg(2+) as cofactor. Mn(2+) serves as cofactor.

It carries out the reaction O-phospho-L-seryl-[protein] + H2O = L-seryl-[protein] + phosphate. It catalyses the reaction O-phospho-L-threonyl-[protein] + H2O = L-threonyl-[protein] + phosphate. The protein is Probable protein phosphatase 2C 76 of Arabidopsis thaliana (Mouse-ear cress).